The primary structure comprises 48 residues: uncharacterized protein (48 aa).

The protein localises to the plastid. The protein resides in the cyanelle. This is an uncharacterized protein from Cyanophora paradoxa.